Here is a 369-residue protein sequence, read N- to C-terminus: Aminomethyltransferase (369 aa).

It belongs to the GcvT family. The glycine cleavage system is composed of four proteins: P, T, L and H.

It catalyses the reaction N(6)-[(R)-S(8)-aminomethyldihydrolipoyl]-L-lysyl-[protein] + (6S)-5,6,7,8-tetrahydrofolate = N(6)-[(R)-dihydrolipoyl]-L-lysyl-[protein] + (6R)-5,10-methylene-5,6,7,8-tetrahydrofolate + NH4(+). Functionally, the glycine cleavage system catalyzes the degradation of glycine. The protein is Aminomethyltransferase of Xanthomonas euvesicatoria pv. vesicatoria (strain 85-10) (Xanthomonas campestris pv. vesicatoria).